A 132-amino-acid polypeptide reads, in one-letter code: MRYAVLLAVVLLLGAFTAEAFSPPPFHICKWKLWKCLKWCAPWDWKCRRKCFWKYWWCLKKFGGHYGGYGYGDDGYGGGGYGGGGYGGGYGGGYGGGYGGGYGDVGYGGGYSGGYSGGYSGGYGSYGHRRKY.

The N-terminal stretch at 1–20 is a signal peptide; that stretch reads MRYAVLLAVVLLLGAFTAEA.

Prismatic layer of shell (at protein level). Expressed primarily in the mantle with highest level in the mantle edge and lower level in the mantle pallium.

Its subcellular location is the secreted. The sequence is that of Glycine-rich protein 3 from Pinctada maxima (Silver-lipped pearl oyster).